Reading from the N-terminus, the 209-residue chain is Protein GrpE (209 aa).

The span at 1–13 (MSNDSSKAKQNQV) shows a compositional bias: polar residues. Residues 1 to 33 (MSNDSSKAKQNQVDEAVEGEILTESEVETGNDE) are disordered. Acidic residues predominate over residues 15 to 31 (EAVEGEILTESEVETGN).

It belongs to the GrpE family. As to quaternary structure, homodimer.

The protein resides in the cytoplasm. In terms of biological role, participates actively in the response to hyperosmotic and heat shock by preventing the aggregation of stress-denatured proteins, in association with DnaK and GrpE. It is the nucleotide exchange factor for DnaK and may function as a thermosensor. Unfolded proteins bind initially to DnaJ; upon interaction with the DnaJ-bound protein, DnaK hydrolyzes its bound ATP, resulting in the formation of a stable complex. GrpE releases ADP from DnaK; ATP binding to DnaK triggers the release of the substrate protein, thus completing the reaction cycle. Several rounds of ATP-dependent interactions between DnaJ, DnaK and GrpE are required for fully efficient folding. The polypeptide is Protein GrpE (Shewanella woodyi (strain ATCC 51908 / MS32)).